Consider the following 378-residue polypeptide: Succinyl-diaminopimelate desuccinylase (378 aa).

H68 provides a ligand contact to Zn(2+). D70 is a catalytic residue. D101 lines the Zn(2+) pocket. The active-site Proton acceptor is the E135. Residues E136, E164, and H350 each coordinate Zn(2+).

Belongs to the peptidase M20A family. DapE subfamily. Homodimer. The cofactor is Zn(2+). Requires Co(2+) as cofactor.

The catalysed reaction is N-succinyl-(2S,6S)-2,6-diaminopimelate + H2O = (2S,6S)-2,6-diaminopimelate + succinate. It functions in the pathway amino-acid biosynthesis; L-lysine biosynthesis via DAP pathway; LL-2,6-diaminopimelate from (S)-tetrahydrodipicolinate (succinylase route): step 3/3. Functionally, catalyzes the hydrolysis of N-succinyl-L,L-diaminopimelic acid (SDAP), forming succinate and LL-2,6-diaminopimelate (DAP), an intermediate involved in the bacterial biosynthesis of lysine and meso-diaminopimelic acid, an essential component of bacterial cell walls. The protein is Succinyl-diaminopimelate desuccinylase of Vibrio parahaemolyticus serotype O3:K6 (strain RIMD 2210633).